Here is a 104-residue protein sequence, read N- to C-terminus: Phycoerythrin alpha-2 chain, chloroplastic (104 aa).

The N-terminal 37 residues, 1–37, are a transit peptide targeting the chloroplast; that stretch reads MSAKIIAFSAVVATASAFAPTAGFVPRLRSGATSVNM. A 5-hydroxylysine modification is found at Lys-41. 2 residues coordinate 15,16-dihydrobiliverdin: Cys-56 and Arg-58. Residues 61–63 form a 15,16-dihydrobiliverdin chromophore region; it reads KEY. Lys-78 contributes to the 15,16-dihydrobiliverdin binding site.

Belongs to the phycoerythrin family. In terms of assembly, heterotetramer of 2 different alpha chains and 2 identical beta chains. The subunit composition could comprise of any combination of 2 out of 4 different alpha units with an invariant beta unit. Contains one covalently linked 15,16-dihydrobiliverdin chromophore.

The protein localises to the plastid. The protein resides in the chloroplast thylakoid membrane. In terms of biological role, light-harvesting photosynthetic tetrapyrrole chromophore-protein from the phycobiliprotein complex. This is Phycoerythrin alpha-2 chain, chloroplastic (cpeA2) from Rhodomonas sp. (strain CS 24) (Chroomonas sp. (strain CS24)).